We begin with the raw amino-acid sequence, 519 residues long: Galactan beta-1,4-galactosyltransferase GALS2 (519 aa).

The helical transmembrane segment at 28–48 (LALMALLVLCTLATLLPFLPS) threads the bilayer. A GT92 domain is found at 257 to 471 (DYLYCGSSLY…YHGSISQRRE (215 aa)).

It belongs to the glycosyltransferase 92 family. As to expression, expressed in the midrib of mature leaves, root vasculature, flower filaments, siliques and seeds.

Its subcellular location is the golgi apparatus membrane. Its function is as follows. Involved in the biosynthesis of beta-1,4-galactan. Beta-1,4-galactans are abundant polysaccharides in plant cell walls and are found as side-chain of rhamnogalacturonan I, which is a major component of pectin. In Arabidopsis thaliana (Mouse-ear cress), this protein is Galactan beta-1,4-galactosyltransferase GALS2.